The chain runs to 5147 residues: Cadherin-related tumor suppressor (5147 aa).

The N-terminal stretch at 1 to 35 is a signal peptide; the sequence is MERLLLLFFLLLAGRESLCQTGDTKLELLAPRGRS. 34 Cadherin domains span residues 36-156, 157-270, 271-382, 383-494, 495-599, 600-708, 709-820, 821-942, 943-1049, 1050-1153, 1154-1278, 1279-1384, 1385-1489, 1490-1601, 1602-1713, 1714-1823, 1824-1922, 1923-2027, 2028-2167, 2168-2278, 2279-2385, 2386-2491, 2492-2596, 2597-2703, 2704-2810, 2811-2913, 2914-3013, 3014-3124, 3125-3229, 3230-3334, 3335-3439, 3440-3545, 3546-3651, and 3652-3756; these read YATT…SPEF, PEPS…PPIF, DHSD…DPII, SFRF…EPVF, EKSE…APQF, SQRE…DPQF, YPRH…LEML, ECGQ…APVF, ALDR…TPVF, DHTS…APQF, TNST…APEF, LRAP…APEF, TQSS…PPIF, PSTA…APVF, VSMN…VPQF, EQRS…PPQF, LDTP…PPLF, EDTV…APIF, DPMS…VPVF, ISAN…SPVF, DPKQ…PTFL, DSPY…DPVF, ELQS…IPKF, DSTT…FPTF, AYMA…APVM, EQLI…PPKF, TRLF…APEF, EHSF…PPKF, EQAE…TPRF, SVNS…PPVF, NHKE…YPQF, LQPV…PPEF, IKHY…GPTF, and TPEG…NPST. Over 36-4583 the chain is Extracellular; it reads YATTYEQYAA…GQDAAQVADP (4548 aa). Residues Asn239, Asn257, Asn276, Asn280, Asn402, and Asn461 are each glycosylated (N-linked (GlcNAc...) asparagine). N-linked (GlcNAc...) asparagine glycans are attached at residues Asn605 and Asn631. N-linked (GlcNAc...) asparagine glycans are attached at residues Asn1155, Asn1367, and Asn1458. 3 N-linked (GlcNAc...) asparagine glycosylation sites follow: Asn1751, Asn1831, and Asn1880. Asn2080, Asn2171, Asn2247, Asn2290, Asn2437, and Asn2581 each carry an N-linked (GlcNAc...) asparagine glycan. N-linked (GlcNAc...) asparagine glycosylation occurs at Asn2799. N-linked (GlcNAc...) asparagine glycans are attached at residues Asn2920, Asn2946, and Asn2967. N-linked (GlcNAc...) asparagine glycosylation is found at Asn3167, Asn3303, Asn3386, Asn3389, and Asn3525. N-linked (GlcNAc...) asparagine glycans are attached at residues Asn3852, Asn3865, and Asn3905. EGF-like domains follow at residues 3950-4011, 4013-4049, 4052-4090, and 4092-4128; these read GYEP…EQCS, RQDP…KHCE, RSDV…NQCE, and VSDS…RHCE. 16 disulfides stabilise this stretch: Cys3954-Cys3966, Cys3960-Cys3999, Cys4001-Cys4010, Cys4017-Cys4028, Cys4022-Cys4037, Cys4039-Cys4048, Cys4056-Cys4067, Cys4061-Cys4078, Cys4080-Cys4089, Cys4096-Cys4107, Cys4101-Cys4116, Cys4118-Cys4127, Cys4294-Cys4320, Cys4325-Cys4341, Cys4334-Cys4350, and Cys4352-Cys4361. Residues 4129 to 4320 enclose the Laminin G-like 1 domain; it reads RFSYGFQPLS…LQQKGILAGC (192 aa). Asn4306 is a glycosylation site (N-linked (GlcNAc...) asparagine). One can recognise an EGF-like 5 domain in the interval 4321-4362; sequence NRQACQPALAAERCGGFAGQCIDRWSSSLCQCGGHLQSPDCS. Positions 4402–4569 constitute a Laminin G-like 2 domain; the sequence is DNQQMRERRA…RYHGKIESGC (168 aa). 5 N-linked (GlcNAc...) asparagine glycosylation sites follow: Asn4414, Asn4471, Asn4487, Asn4539, and Asn4550. Cys4536 and Cys4569 are disulfide-bonded. A helical membrane pass occupies residues 4584-4609; that stretch reads LSIGFTLVIVFFVILVVAILGSYVIY. Topologically, residues 4610 to 5147 are cytoplasmic; sequence RFRGKQEKIG…NGPAAPEEYV (538 aa). Residues 4744–4771 are essential for stability of mitochondrial electron chain complexes I and V, and promotes interaction with ND-24; the sequence is PEHYDLENASSIAPSDIDIVYHYKGYRE. Disordered regions lie at residues 4787-4850, 4871-4921, and 4967-5041; these read AYTH…SQQP, TSSS…QTSM, and GDVD…PIPP. Residues 4826 to 4835 are compositionally biased toward polar residues; it reads SASRTHQSTP. Composition is skewed to low complexity over residues 4838–4850 and 4891–4918; these read RLSP…SQQP and SPVM…QAQQ. Ser4843 is subject to Phosphoserine. Residues 4972 to 5008 show a composition bias toward polar residues; sequence HSSTSTDESGNDSFTCSEIEYDNNSLSGDGKYSTSKS. Phosphoserine occurs at positions 5054 and 5061. The disordered stretch occupies residues 5113-5147; it reads PDTNGPSQQQQQQTQVVSTLRMPSSNGPAAPEEYV. Positions 5119–5131 are enriched in low complexity; the sequence is SQQQQQQTQVVST.

In terms of assembly, interacts with Fbxl7. Ft-mito interacts with NADH dehydrogenase subunit ND-24 and with ATP synthase subunit ATPsynC. Post-translationally, phosphorylated by fj on Ser/Thr of cadherin domains. Phosphorylation by fj enhances binding to ds. Phosphorylated in the cytoplasmic domain in a dco-dependent manner which is promoted by ds. In terms of processing, proteolytically cleaved to yield stably associated N- and C-terminal fragments. The C-terminal fragment is processed further to release a 68 kDa mitochondrial fragment, Ft-mito.

It localises to the cell membrane. The protein resides in the apical cell membrane. The protein localises to the mitochondrion. In terms of biological role, involved in regulation of planar cell polarity in the compound eye where it is required for correct specification of the R3 and R4 photoreceptor cells by regulating Fz activity in the R3/R4 precursor cells. This is likely to occur through creation of an ft gradient so that the equatorial R3/R4 precursor cell has a higher level of ft function than its polar neighbor. Also required for planar cell polarity of wing hairs. Mediates heterophilic cell adhesion in vitro and is required to stabilize ds on the cell surface. Involved in regulation of eye imaginal disk size. Upstream component of the Hippo pathway where it is likely to act as a cell surface receptor involved in regulation of tissue size and is required for the localization and stability of ex. Probably acts as a cell surface receptor for ds. Regulates mitochondrial electron transport chain integrity and promotes oxidative phosphorylation. This chain is Cadherin-related tumor suppressor, found in Drosophila melanogaster (Fruit fly).